The primary structure comprises 227 residues: Transcription antitermination protein NusB (227 aa).

2 disordered regions span residues 165–189 (ASES…SDED) and 201–227 (AEET…ADES). Composition is skewed to acidic residues over residues 178-189 (DDSDALDDSDED) and 201-214 (AEET…AEDS). Residues 215 to 227 (EVSKVSEEKADES) are compositionally biased toward basic and acidic residues.

It belongs to the NusB family.

Its function is as follows. Involved in transcription antitermination. Required for transcription of ribosomal RNA (rRNA) genes. Binds specifically to the boxA antiterminator sequence of the ribosomal RNA (rrn) operons. The chain is Transcription antitermination protein NusB from Corynebacterium glutamicum (strain ATCC 13032 / DSM 20300 / JCM 1318 / BCRC 11384 / CCUG 27702 / LMG 3730 / NBRC 12168 / NCIMB 10025 / NRRL B-2784 / 534).